A 324-amino-acid chain; its full sequence is 4-hydroxy-3-methylbut-2-enyl diphosphate reductase (324 aa).

[4Fe-4S] cluster is bound at residue Cys-13. Positions 41 and 75 each coordinate (2E)-4-hydroxy-3-methylbut-2-enyl diphosphate. Dimethylallyl diphosphate contacts are provided by His-41 and His-75. Positions 41 and 75 each coordinate isopentenyl diphosphate. Position 97 (Cys-97) interacts with [4Fe-4S] cluster. His-125 is a (2E)-4-hydroxy-3-methylbut-2-enyl diphosphate binding site. His-125 serves as a coordination point for dimethylallyl diphosphate. Isopentenyl diphosphate is bound at residue His-125. Glu-127 acts as the Proton donor in catalysis. Thr-168 is a (2E)-4-hydroxy-3-methylbut-2-enyl diphosphate binding site. Cys-225 contacts [4Fe-4S] cluster. (2E)-4-hydroxy-3-methylbut-2-enyl diphosphate is bound by residues Ser-253, Ser-254, Asn-255, and Ser-302. 4 residues coordinate dimethylallyl diphosphate: Ser-253, Ser-254, Asn-255, and Ser-302. Isopentenyl diphosphate-binding residues include Ser-253, Ser-254, Asn-255, and Ser-302.

It belongs to the IspH family. [4Fe-4S] cluster serves as cofactor.

It catalyses the reaction isopentenyl diphosphate + 2 oxidized [2Fe-2S]-[ferredoxin] + H2O = (2E)-4-hydroxy-3-methylbut-2-enyl diphosphate + 2 reduced [2Fe-2S]-[ferredoxin] + 2 H(+). The catalysed reaction is dimethylallyl diphosphate + 2 oxidized [2Fe-2S]-[ferredoxin] + H2O = (2E)-4-hydroxy-3-methylbut-2-enyl diphosphate + 2 reduced [2Fe-2S]-[ferredoxin] + 2 H(+). It functions in the pathway isoprenoid biosynthesis; dimethylallyl diphosphate biosynthesis; dimethylallyl diphosphate from (2E)-4-hydroxy-3-methylbutenyl diphosphate: step 1/1. It participates in isoprenoid biosynthesis; isopentenyl diphosphate biosynthesis via DXP pathway; isopentenyl diphosphate from 1-deoxy-D-xylulose 5-phosphate: step 6/6. Catalyzes the conversion of 1-hydroxy-2-methyl-2-(E)-butenyl 4-diphosphate (HMBPP) into a mixture of isopentenyl diphosphate (IPP) and dimethylallyl diphosphate (DMAPP). Acts in the terminal step of the DOXP/MEP pathway for isoprenoid precursor biosynthesis. This is 4-hydroxy-3-methylbut-2-enyl diphosphate reductase from Chlorobium limicola (strain DSM 245 / NBRC 103803 / 6330).